The chain runs to 162 residues: Sec-independent protein translocase protein TatB (162 aa).

A helical transmembrane segment spans residues 1-21; that stretch reads MFDIGFSELILIFVVGLVVLG. Residues 136-162 form a disordered region; the sequence is LTAYYPPDDDLVSPSTTKLEQDKQNVN.

This sequence belongs to the TatB family. In terms of assembly, the Tat system comprises two distinct complexes: a TatABC complex, containing multiple copies of TatA, TatB and TatC subunits, and a separate TatA complex, containing only TatA subunits. Substrates initially bind to the TatABC complex, which probably triggers association of the separate TatA complex to form the active translocon.

The protein resides in the cell inner membrane. Functionally, part of the twin-arginine translocation (Tat) system that transports large folded proteins containing a characteristic twin-arginine motif in their signal peptide across membranes. Together with TatC, TatB is part of a receptor directly interacting with Tat signal peptides. TatB may form an oligomeric binding site that transiently accommodates folded Tat precursor proteins before their translocation. This chain is Sec-independent protein translocase protein TatB, found in Haemophilus ducreyi (strain 35000HP / ATCC 700724).